A 32-amino-acid polypeptide reads, in one-letter code: ilv operon leader peptide (32 aa).

In Yersinia pestis, this protein is ilv operon leader peptide (ilvL).